The sequence spans 539 residues: Cytochrome c oxidase subunit 1 homolog (539 aa).

2 helical membrane passes run 28–48 and 75–95; these read LFAAHMWVLFFTLVVSTLLLL and GVMATVFWGVVGFLVGVVVAL. Residue His117 coordinates heme b. Helical transmembrane passes span 118–138, 154–174, 187–207, 214–234, 265–285, 298–318, 330–350, 368–388, 402–422, 443–463, and 498–518; these read TSAVIFAFGGNALIATSFYVV, FVFWGYNLFIIMAATGYLLGI, VDLWLTIVWVAYLATFLGTIL, ISVANWFYLSFIVTIAMLHIV, GHNAVGFFLTAGFLGMMYYFI, LSIIHFWALIFMYIWAGPHHL, LGMVFSIMLWMPSWGGMINGL, MMVMAVAFYGMATFEGPMMSI, IGHVHSGALGWNGMITFGAIY, HFWLATLGIVVYAAVMWVAGI, and LGGLMFLSGALIMAYNVTMTI. Cu cation is bound by residues His266, His316, and His317. 2 residues coordinate heme b: His404 and His406.

The protein belongs to the heme-copper respiratory oxidase family. It depends on Cu(2+) as a cofactor. The cofactor is heme b.

The protein localises to the cell membrane. It carries out the reaction 4 Fe(II)-[cytochrome c] + O2 + 8 H(+)(in) = 4 Fe(III)-[cytochrome c] + 2 H2O + 4 H(+)(out). It functions in the pathway energy metabolism; oxidative phosphorylation. Its function is as follows. Cytochrome c oxidase is the component of the respiratory chain that catalyzes the reduction of oxygen to water. Subunits 1-3 form the functional core of the enzyme complex. Co I is the catalytic subunit of the enzyme. Electrons originating in cytochrome c or a quinol are transferred to the bimetallic center formed by a high-spin heme and copper B. This Agrobacterium tumefaciens (strain T37) protein is Cytochrome c oxidase subunit 1 homolog (fixN).